Here is a 146-residue protein sequence, read N- to C-terminus: VHLTAEEKNAITSLWGKVAIEQTGGEALGRLLIVYPWTSRFFDHFGDLSNAKAVMGNPKVLAHGAKVLVAFGDAIKNLDNLKGTFAKLSELHCDKLHVDPENFKLLGNIIVICLAEHFGKEFTIDTQVAWQKLVAGVANALAHKYH.

Val1 carries the N-acetylvaline modification. In terms of domain architecture, Globin spans 2 to 146 (HLTAEEKNAI…VANALAHKYH (145 aa)). The residue at position 12 (Thr12) is a Phosphothreonine. Residue Lys59 is modified to N6-acetyllysine. Residue His63 coordinates heme b. The residue at position 82 (Lys82) is an N6-acetyllysine. His92 provides a ligand contact to heme b. At Cys93 the chain carries S-nitrosocysteine. N6-acetyllysine is present on Lys144.

It belongs to the globin family. Heterotetramer of two alpha chains and two beta chains. In terms of tissue distribution, red blood cells.

Functionally, involved in oxygen transport from the lung to the various peripheral tissues. This is Hemoglobin subunit beta (HBB) from Osphranter rufus (Red kangaroo).